The following is a 564-amino-acid chain: 4-hydroxybutyrate--CoA ligase 1 (564 aa).

A helical transmembrane segment spans residues 105 to 125 (VHPMHWAVFLAVIKGGFVMVP). Residues 204-212 (TSGTTGMPK), 343-348 (DFYGQT), Asp429, and Arg444 each bind ATP. A substrate-binding site is contributed by Thr348. 452–454 (SDY) serves as a coordination point for CoA. Position 455 (Arg455) interacts with substrate. Residues Arg484, Lys513, and 521-523 (VPR) contribute to the CoA site. Lys538 provides a ligand contact to ATP.

This sequence belongs to the ATP-dependent AMP-binding enzyme family. It depends on Mg(2+) as a cofactor. Mn(2+) serves as cofactor.

It localises to the membrane. It carries out the reaction 4-hydroxybutanoate + ATP + CoA = 4-hydroxybutanoyl-CoA + AMP + diphosphate. The catalysed reaction is acetate + ATP + CoA = acetyl-CoA + AMP + diphosphate. It catalyses the reaction propanoate + ATP + CoA = propanoyl-CoA + AMP + diphosphate. The enzyme catalyses a medium-chain fatty acid + ATP + CoA = a medium-chain fatty acyl-CoA + AMP + diphosphate. Functionally, involved in the 3-hydroxypropionate/4-hydroxybutyrate cycle which incorporates carbon dioxide into cellular carbon. Catalyzes the ligation of coenzyme A (CoA) to 4-hydroxybutyrate (4HB). It can also use butyrate, valerate, propionate, acetate and 3-hydroxybutyrate (3HB) as substrates. This Metallosphaera sedula (strain ATCC 51363 / DSM 5348 / JCM 9185 / NBRC 15509 / TH2) protein is 4-hydroxybutyrate--CoA ligase 1.